Here is an 858-residue protein sequence, read N- to C-terminus: Tetratricopeptide repeat protein 7A (858 aa).

S51 bears the Phosphoserine mark. TPR repeat units follow at residues 121–157, 177–210, 414–447, 497–531, 533–565, and 566–599; these read CEAMLILGKLHYVEGSYRDAISMYARAGIDDMSMENK, ERLPNSIASRFRLTEREEEVITCFERASWIAQVF, FHLWYQVALSMVACGKSAYAVSLLRECVKLRPSD, YSLQATDATLKSKQDELHRKALQTLERAQQLAPSD, QVILYVSLQLALVRQISSAMEQLQEALKVRKDD, and AHALHLLALLFSAQKHHQHALDVVNMAITEHPEN. At S182 the chain carries Phosphoserine. 4 positions are modified to phosphoserine: S647, S678, S679, and S690. T693 carries the post-translational modification Phosphothreonine. 3 TPR repeats span residues 745 to 778, 780 to 812, and 813 to 846; these read HSVLYMRGRLAEVKGNLEEAKQLYKEALTVNPDG, RIMHSLGLMLSRLGHKSLAQKVLRDAVERQSTC, and HEAWQGLGEVLQAQGQNEAAVDCFLTALELEASS.

As to quaternary structure, component of a phosphatidylinositol 4-kinase (PI4K) complex, composed of PI4KA, EFR3 (EFR3A or EFR3B), TTC7 (TTC7A or TTC7B) and HYCC (HYCC1 or HYCC2). Interacts with PI4KA. Interaction with PI4KA is direct. Interacts with EFR3 (EFR3A or EFR3B), interaction is direct. Interacts with HYCC (HYCC1 or HYCC2), interaction is direct. Association with the PI4K complex is strongly reduced by TMEM150A. As to expression, expressed in epithelial cells of the intestine, thymus, and pancreas (at protein level).

Its subcellular location is the cytoplasm. The protein resides in the cell membrane. Component of a complex required to localize phosphatidylinositol 4-kinase (PI4K) to the plasma membrane. The complex acts as a regulator of phosphatidylinositol 4-phosphate (PtdIns(4)P) synthesis. In the complex, plays a central role in bridging PI4KA to EFR3B and HYCC1, via direct interactions. This Homo sapiens (Human) protein is Tetratricopeptide repeat protein 7A.